The following is a 209-amino-acid chain: MICOS complex subunit mic19 (209 aa).

2 coiled-coil regions span residues 48–86 (LELE…DTGS) and 127–156 (EVAA…GRKK).

This sequence belongs to the MICOS complex subunit Mic19 family. Component of the mitochondrial contact site and cristae organizing system (MICOS) complex.

It is found in the mitochondrion inner membrane. In terms of biological role, component of the MICOS complex, a large protein complex of the mitochondrial inner membrane that plays crucial roles in the maintenance of crista junctions, inner membrane architecture, and formation of contact sites to the outer membrane. Involved in osmoadaptation. This chain is MICOS complex subunit mic19, found in Emericella nidulans (strain FGSC A4 / ATCC 38163 / CBS 112.46 / NRRL 194 / M139) (Aspergillus nidulans).